A 293-amino-acid polypeptide reads, in one-letter code: Probable chromosome 2-partitioning protein ParB (293 aa).

It belongs to the ParB family.

Involved in chromosome partition. Localize to both poles of the predivisional cell following completion of DNA replication. Binds to the DNA origin of replication. This is Probable chromosome 2-partitioning protein ParB (parB2) from Deinococcus radiodurans (strain ATCC 13939 / DSM 20539 / JCM 16871 / CCUG 27074 / LMG 4051 / NBRC 15346 / NCIMB 9279 / VKM B-1422 / R1).